Consider the following 212-residue polypeptide: MKILGLTGSIGMGKSTAAAMLRRLGVPVHDADATVHALFARGGKAVAAVDAAFPGVVRDGAVDRTALGAQVFGDGAALKRLEAIVHPLVRAAERDFLARHRRARTRLVVLDIPLLFETHGESRCDLVAVVSAPAFLQAARVLARPGMTRQRLDAVLAKQMPDGQKRRRADVVIPTGLGKGPALKRLKAVVAMMRGSRPAAPVGGDASKPPFY.

Residues 3-204 (ILGLTGSIGM…GSRPAAPVGG (202 aa)) enclose the DPCK domain. ATP is bound at residue 11-16 (GMGKST).

It belongs to the CoaE family.

It localises to the cytoplasm. It catalyses the reaction 3'-dephospho-CoA + ATP = ADP + CoA + H(+). The protein operates within cofactor biosynthesis; coenzyme A biosynthesis; CoA from (R)-pantothenate: step 5/5. Its function is as follows. Catalyzes the phosphorylation of the 3'-hydroxyl group of dephosphocoenzyme A to form coenzyme A. The sequence is that of Dephospho-CoA kinase from Paramagnetospirillum magneticum (strain ATCC 700264 / AMB-1) (Magnetospirillum magneticum).